The primary structure comprises 118 residues: Heavy metal-associated isoprenylated plant protein 47 (118 aa).

The region spanning M1–L67 is the HMA domain. C115 carries the post-translational modification Cysteine methyl ester. C115 carries the S-farnesyl cysteine lipid modification. Residues L116–M118 constitute a propeptide, removed in mature form.

This sequence belongs to the HIPP family.

Its function is as follows. Heavy-metal-binding protein. The polypeptide is Heavy metal-associated isoprenylated plant protein 47 (Arabidopsis thaliana (Mouse-ear cress)).